The primary structure comprises 730 residues: Elongation factor 2 (730 aa).

One can recognise a tr-type G domain in the interval 19 to 260 (EKIRNIGIVA…MVIRFLPNPL (242 aa)). GTP is bound by residues 28-35 (AHIDHGKT), 94-98 (DTPGH), and 148-151 (NKVD). Position 596 is a diphthamide (histidine 596).

It belongs to the TRAFAC class translation factor GTPase superfamily. Classic translation factor GTPase family. EF-G/EF-2 subfamily.

Its subcellular location is the cytoplasm. Catalyzes the GTP-dependent ribosomal translocation step during translation elongation. During this step, the ribosome changes from the pre-translocational (PRE) to the post-translocational (POST) state as the newly formed A-site-bound peptidyl-tRNA and P-site-bound deacylated tRNA move to the P and E sites, respectively. Catalyzes the coordinated movement of the two tRNA molecules, the mRNA and conformational changes in the ribosome. This chain is Elongation factor 2 (fusA), found in Methanosarcina thermophila.